An 831-amino-acid polypeptide reads, in one-letter code: Protein ADP-ribosyltransferase PARP3 (831 aa).

The segment at 1 to 69 (MVHETRSRTL…KKLKAEESDL (69 aa)) is disordered. Basic and acidic residues-rich tracts occupy residues 15-32 (EEGK…KEQE) and 43-66 (KTAD…KAEE). The region spanning 49–199 (EHDGEQEPSK…NKYPKRNLDD (151 aa)) is the PADR1 zinc-binding domain. The interval 124–168 (GPLDKCPVCGGQLECKGLKYNCTGTHSEWACCSFSTNNPSRRGGP) is zinc ribbon. The Zn(2+) site is built by cysteine 129, cysteine 132, cysteine 145, and cysteine 155. The 91-residue stretch at 200–290 (EGIFSGMMIA…EKQPLAAYDI (91 aa)) folds into the BRCT domain. A WGR domain is found at 338-439 (GGHIYEKDGI…KKFKKKCMKM (102 aa)). In terms of domain architecture, PARP alpha-helical spans 466 to 585 (HCKLDPSVTF…DINVASRLIG (120 aa)). The PARP catalytic domain occupies 594 to 827 (DPLSQCYKKL…VKYEEQNMEV (234 aa)).

Belongs to the ARTD/PARP family.

It localises to the nucleus. The catalysed reaction is L-aspartyl-[protein] + NAD(+) = 4-O-(ADP-D-ribosyl)-L-aspartyl-[protein] + nicotinamide. It carries out the reaction L-glutamyl-[protein] + NAD(+) = 5-O-(ADP-D-ribosyl)-L-glutamyl-[protein] + nicotinamide. Functionally, involved in the base excision repair (BER) pathway, by catalyzing the poly(ADP-ribosyl)ation of a limited number of acceptor proteins involved in chromatin architecture and in DNA metabolism. This modification follows DNA damages and appears as an obligatory step in a detection/signaling pathway leading to the reparation of DNA strand breaks. This chain is Protein ADP-ribosyltransferase PARP3 (PARP3), found in Oryza sativa subsp. japonica (Rice).